The sequence spans 848 residues: Probable serine/threonine-protein kinase DDB_G0278535 (848 aa).

3 stretches are compositionally biased toward low complexity: residues methionine 1 to histidine 52, threonine 60 to threonine 85, and threonine 95 to serine 116. Residues methionine 1–valine 117 form a disordered region. ANK repeat units lie at residues methionine 181–isoleucine 212, serine 218–isoleucine 248, aspartate 252–alanine 285, asparagine 289–valine 320, and arginine 324–isoleucine 353. An SAM domain is found at lysine 378 to glutamine 441. Residues asparagine 448–asparagine 478 are disordered. The segment covering threonine 452–serine 472 has biased composition (low complexity). Residues leucine 529–methionine 799 enclose the Protein kinase domain. Residues leucine 535–valine 543 and lysine 556 contribute to the ATP site. Aspartate 650 acts as the Proton acceptor in catalysis. The disordered stretch occupies residues arginine 810 to threonine 848. Over residues threonine 822–threonine 848 the composition is skewed to low complexity.

Belongs to the protein kinase superfamily. TKL Ser/Thr protein kinase family.

It carries out the reaction L-seryl-[protein] + ATP = O-phospho-L-seryl-[protein] + ADP + H(+). The catalysed reaction is L-threonyl-[protein] + ATP = O-phospho-L-threonyl-[protein] + ADP + H(+). In Dictyostelium discoideum (Social amoeba), this protein is Probable serine/threonine-protein kinase DDB_G0278535.